Here is a 125-residue protein sequence, read N- to C-terminus: Multifunctional methyltransferase subunit TRM112-like protein (125 aa).

Residues 2–119 (KLLTHNLLSS…SRGIPNMLLS (118 aa)) form the TRM112 domain. A phosphoserine mark is found at S119 and S125.

It belongs to the TRM112 family. Part of the heterodimeric BUD23-TRM112 methyltransferase complex; this heterodimerization is necessary for the metabolic stability and activity of the catalytic subunit BUD23. Part of the heterodimeric N6AMT1-TRM112 methyltransferase complex; this heterodimerization is necessary for S-adenosyl-L-methionine-binding to N6AMT1/HEMK2. Part of the heterodimeric ALKBH8-TRM112 methyltransferase complex. Part of the heterodimeric METTL5-TRM112 methyltransferase complex; this heterodimerization is necessary for the stability of the catalytic subunit METTL5. Part of the heterodimeric THUMPD3-TRM112 methyltransferase complex; this complex forms an active tRNA methyltransferase, where TRMT112 acts as an activator of the catalytic subunit THUMPD3. Part of the heterodimeric THUMPD2-TRM112 methyltransferase complex; this complex forms an active tRNA methyltransferase, where TRMT112 acts as an activator of the catalytic subunit THUMPD2. Part of the heterodimeric TRMT11-TRM112 methyltransferase complex; this complex forms an active tRNA methyltransferase, where TRMT112 acts as an activator of the catalytic subunit TRMT11.

The protein resides in the nucleus. It is found in the nucleoplasm. It localises to the cytoplasm. The protein localises to the perinuclear region. In terms of biological role, acts as an activator of both rRNA/tRNA and protein methyltransferases. Together with methyltransferase BUD23, methylates the N(7) position of a guanine in 18S rRNA. The heterodimer with N6AMT1/HEMK2 catalyzes N5-methylation of ETF1 on 'Gln-185', using S-adenosyl L-methionine as methyl donor. The heterodimer with N6AMT1/HEMK2 also monomethylates 'Lys-12' of histone H4 (H4K12me1). The heterodimer with ALKBH8 catalyzes the methylation of 5-carboxymethyl uridine to 5-methylcarboxymethyl uridine at the wobble position of the anticodon loop in target tRNA species. Together with methyltransferase THUMPD3, catalyzes the formation of N(2)-methylguanosine at position 6 in a broad range of tRNA substrates and at position 7 of tRNA(Trp). Involved in the pre-rRNA processing steps leading to small-subunit rRNA production. Together with methyltransferase METTL5, specifically methylates the 6th position of adenine in position 1832 of 18S rRNA. In Homo sapiens (Human), this protein is Multifunctional methyltransferase subunit TRM112-like protein.